The primary structure comprises 161 residues: Cyclic pyranopterin monophosphate synthase (161 aa).

Substrate is bound by residues 75–77 and 113–114; these read LCH and ME. The active site involves D128.

The protein belongs to the MoaC family. In terms of assembly, homohexamer; trimer of dimers.

It catalyses the reaction (8S)-3',8-cyclo-7,8-dihydroguanosine 5'-triphosphate = cyclic pyranopterin phosphate + diphosphate. The protein operates within cofactor biosynthesis; molybdopterin biosynthesis. Functionally, catalyzes the conversion of (8S)-3',8-cyclo-7,8-dihydroguanosine 5'-triphosphate to cyclic pyranopterin monophosphate (cPMP). In Edwardsiella ictaluri (strain 93-146), this protein is Cyclic pyranopterin monophosphate synthase.